A 309-amino-acid chain; its full sequence is Putative S-adenosyl-L-methionine-dependent methyltransferase Mflv_0743 (309 aa).

S-adenosyl-L-methionine-binding positions include Asp134 and 163–164 (DL).

This sequence belongs to the UPF0677 family.

Exhibits S-adenosyl-L-methionine-dependent methyltransferase activity. The protein is Putative S-adenosyl-L-methionine-dependent methyltransferase Mflv_0743 of Mycolicibacterium gilvum (strain PYR-GCK) (Mycobacterium gilvum (strain PYR-GCK)).